The primary structure comprises 440 residues: Tripartite motif-containing protein 14 (440 aa).

Residues 17–59 (AYGWRCPEHSERPAELFCRRCGRCVCALCPVLGAHRGHPVGLA) form a B box-type zinc finger. The Zn(2+) site is built by Cys-22, His-25, Cys-45, and His-51. Residues 247 to 440 (ALLKTSPSPE…EGPISIPRLP (194 aa)) form the B30.2/SPRY domain.

It belongs to the TRIM/RBCC family. As to quaternary structure, interacts with MAVS. Interacts with WRNIP1 and PPP6C; these interactions positively regulate the RIG-I signaling pathway. Interacts with CGAS; this interaction stabilizes CGAS and promotes type I interferon production. Interacts with USP14; this interaction mediates the cleavage of 'Lys-48'-linked ubiquitination of CGAS. Interacts with TBK1. Interacts with SPI1. Interacts with KDM4D and USP14. Post-translationally, ubiquitinated. Undergoes 'Lys-63'-linked polyubiquitination; this modification allows IKBKG/NEMO recruitment to MAVS. Undergoes 'Lys-48'-linked polyubiquitination by RNF125; this modification mediates its degradation via the ubiquitin-proteasome pathway. As to expression, expressed with high level in spleen, thymus, liver and testis. Expressed with low level in the brain, kidney, and skeletal muscle. Expressed in various differentiation stages of B-lymphocytes.

Its subcellular location is the mitochondrion outer membrane. The protein localises to the cytoplasmic vesicle. It is found in the phagosome. Plays a role in the innate immune defense against viruses. Facilitates the type I IFN response by interacting with MAVS at the outer mitochondria membrane and thereby recruiting NF-kappa-B essential modulator IKBKG/NEMO to the MAVS signalosome, leading to the activation of both the IFN regulatory factor 3/IRF3 and NF-kappa-B pathways. Positively regulates the CGAS-induced type I interferon signaling pathway by stabilizing CGAS and inhibiting its autophagic degradation. Inhibits the transcriptional activity of SPI1 in a dose-dependent manner. Also inhibits OPTN-mediated selective autophagic degradation of KDM4D and thereby negatively regulates H3K9me2 and H3K9me3. Mechanistically, recruits USP14 to remove the 'Lys-63'-linked ubiquitination of KDM4D, preventing its recognition by OPTN and subsequent degradation. In terms of biological role, plays an essential role in the innate immune defense against viruses and bacteria. Facilitates the type I IFN response by interacting with MAVS at the outer mitochondria membrane and thereby recruiting NF-kappa-B essential modulator IKBKG/NEMO to the MAVS signalosome, leading to the activation of both the IFN regulatory factor 3/IRF3 and NF-kappa-B pathways. Positively regulates the CGAS-induced type I interferon signaling pathway by stabilizing CGAS and inhibiting its autophagic degradation. Acts as a scaffold between TBK1 and STAT3 to promote phosphorylation of STAT3 and resolve interferon-stimulated gene (ISG) expression. Inhibits the transcriptional activity of SPI1 in a dose-dependent manner. This chain is Tripartite motif-containing protein 14 (Trim14), found in Mus musculus (Mouse).